The following is a 347-amino-acid chain: MDINEKAPGPSGRRPARRRDGGGQVLVLYLAIAVVVAVLAWPWLAPRLGSFPGSLLSWIGDGGSVGAPRPATLDERMDMVEAALAPLAMRIAEADRRLAMLEANPRTAGEDPRKEAAGVSADPEQMSWMAAEIATLKGDLEIVRKLAADEGGATKLSGAVEKAEAAFRRIAERRDRAPLFLAALGQLREAVDRGSPYPAQMKAAMILAEKGTADKLAPLVMGSATGIVTRVGLAESFRVTAAAARKLDVPADSGWVPPNIRRWLGGAVLIRRTEGGEEGLDGILNSTSRLLAGGDLAGAAALLRRAEGPSLAAIQPWLEAAELRLSADAALSELSAMAMTVASSRDE.

A helical transmembrane segment spans residues 25-45; the sequence is VLVLYLAIAVVVAVLAWPWLA.

The protein resides in the magnetosome membrane. In terms of biological role, the 4 genes of this operon collectively influence magnetosome size and number. In Magnetospirillum gryphiswaldense (strain DSM 6361 / JCM 21280 / NBRC 15271 / MSR-1), this protein is Probable magnetosome protein Mms36.